The following is a 568-amino-acid chain: Kelch-like protein 12 (568 aa).

The 68-residue stretch at 33-100 folds into the BTB domain; that stretch reads CDVTLRVEQK…VYTETVHVTV (68 aa). The BACK domain maps to 135–236; the sequence is CLGIRDFAET…LTPRYITDVI (102 aa). 6 Kelch repeats span residues 282–329, 331–379, 380–426, 427–473, 474–520, and 522–567; these read VLLV…SLHD, IYVI…TLGD, MIYV…VASG, VIYC…LLND, HIYV…VLRG, and LYAI…ALRE.

As to quaternary structure, component of the BCR(KLHL12) E3 ubiquitin ligase complex, at least composed of CUL3 and KLHL12 and RBX1. This complex interacts with DVL3 upon activation of the Wnt signaling pathway by WNT3A. Interacts with DRD4, KLHL2 and SEC31A. Interacts with PEF1 and PDCD6/ALG-2; interaction takes place in response to cytosolic calcium increase and leads to bridge together the BCR(KLHL12) complex and SEC31 (SEC31A or SEC31B). Ubiquitinated by the SCF(FBXL17) complex, leading to its degradation by the proteasome: ubiquitination by the SCF(FBXL17) complex takes place when aberrant BTB domain dimers are formed.

It localises to the cytoplasmic vesicle. Its subcellular location is the COPII-coated vesicle. It participates in protein modification; protein ubiquitination. Functionally, substrate-specific adapter of a BCR (BTB-CUL3-RBX1) E3 ubiquitin ligase complex that acts as a negative regulator of Wnt signaling pathway and ER-Golgi transport. The BCR(KLHL12) complex is involved in ER-Golgi transport by regulating the size of COPII coats, thereby playing a key role in collagen export, which is required for embryonic stem (ES) cells division: BCR(KLHL12) acts by mediating monoubiquitination of SEC31 (SEC31A or SEC31B). The BCR(KLHL12) complex is also involved in neural crest specification: in response to cytosolic calcium increase, interacts with the heterodimer formed with PEF1 and PDCD6/ALG-2, leading to bridge together the BCR(KLHL12) complex and SEC31 (SEC31A or SEC31B), promoting monoubiquitination of SEC31 and subsequent collagen export. As part of the BCR(KLHL12) complex, also acts as a negative regulator of the Wnt signaling pathway by mediating ubiquitination and subsequent proteolysis of DVL3. The BCR(KLHL12) complex also mediates polyubiquitination of DRD4 and PEF1, without leading to degradation of these proteins. This Bos taurus (Bovine) protein is Kelch-like protein 12 (KLHL12).